A 600-amino-acid polypeptide reads, in one-letter code: Leiomodin-1 (600 aa).

Phosphoserine is present on Ser-12. Disordered stretches follow at residues 38 to 61 (VVDP…QSTG), 80 to 324 (MQRE…PLER), and 472 to 573 (DKQR…QEKN). 5 stretches are compositionally biased toward basic and acidic residues: residues 80-127 (MQRE…EPKR), 134-240 (FSRD…EKMK), 247-256 (DMKKEDEKVK), 263-292 (DTKK…KTPE), and 472-497 (DKQR…DLLE). 2 positions are modified to phosphoserine: Ser-85 and Ser-135. Tandem repeats lie at residues 165–180 (AAVD…RGEE), 181–196 (RAVA…GSDR), 197–212 (NTGL…EEMK), 213–228 (EVAK…GERR), 229–244 (NTDT…RAGG), 245–260 (NTDM…RGTG), 261–276 (NTDT…KNEP), and 277–293 (LHEK…TPEK). The tract at residues 165–293 (AAVDKKEAGK…DDSKTKTPEK (129 aa)) is 8 X approximate tandem repeats. Residues 508–527 (SPKPSPQPSPKPSPKNSPKK) are 5 X 4 AA approximate tandem repeats. Pro residues-rich tracts occupy residues 510 to 522 (KPSP…PSPK) and 532 to 543 (AAPPPPPPPLAP). Position 555 is a phosphoserine (Ser-555). In terms of domain architecture, WH2 spans 574-593 (SRDQLLAAIRSSNLKQLKKV).

The protein belongs to the tropomodulin family. In terms of tissue distribution, detected in lung vascular smooth muscle (at protein level). Detected in thyroid and extraocular smooth muscle, but not skeletal muscle. Detected in heart, aorta, skeletal muscle, colon, urinary bladder, uterus, stomach, and small intestine.

The protein resides in the cytoplasm. It is found in the myofibril. Its subcellular location is the sarcomere. The protein localises to the cytoskeleton. Its function is as follows. Required for proper contractility of visceral smooth muscle cells. Mediates nucleation of actin filaments. This Homo sapiens (Human) protein is Leiomodin-1 (LMOD1).